A 197-amino-acid polypeptide reads, in one-letter code: Penicillin-binding protein activator LpoB (197 aa).

The first 17 residues, 1–17 (MIKRMSGIALAALLLSG), serve as a signal peptide directing secretion. Cys-18 is lipidated: N-palmitoyl cysteine. Residue Cys-18 is the site of S-diacylglycerol cysteine attachment. The segment at 23-57 (PRGETPSQPPAPTTPAKPSVVPTPTPPVVTPVPQP) is disordered. Positions 29–57 (SQPPAPTTPAKPSVVPTPTPPVVTPVPQP) are enriched in pro residues.

The protein belongs to the LpoB family. Interacts with PBP1b.

The protein resides in the cell outer membrane. In terms of biological role, regulator of peptidoglycan synthesis that is essential for the function of penicillin-binding protein 1B (PBP1b). The chain is Penicillin-binding protein activator LpoB from Edwardsiella piscicida.